The sequence spans 101 residues: Thrombin-like enzyme okinaxobin-1 (101 aa).

A signal peptide spans 1-16; sequence LIRVLANLLILQLSYA. Residues 17 to 22 constitute a propeptide that is removed on maturation; that stretch reads QKSSEL. Residues 23 to 101 enclose the Peptidase S1 domain; the sequence is VIGGDECNIN…PKKKYFFRCR (79 aa). Cys-50 and Cys-66 are oxidised to a cystine. The Charge relay system role is filled by His-65.

It belongs to the peptidase S1 family. Snake venom subfamily. As to quaternary structure, monomer. Glycosylated. In terms of tissue distribution, expressed by the venom gland.

Its subcellular location is the secreted. Strongly inactivated by diisopropylfluorophosphate (DFP) and phenylmethanesulfonyl fluoride (PMSF), and to a lesser extent by tosyl-L-lysine chloromethyl ketone (TLCK). Thrombin-like snake venom serine protease that releases specifically fibrinopeptide B from fibrinogen (FGB) to form fibrin clots. Shows a preferential cleavage at Arg-|-Gly bonds in fibrinogen beta chains. Cleaves fibrinogen beta chains preferentially to alpha chains. The polypeptide is Thrombin-like enzyme okinaxobin-1 (Ovophis okinavensis (Ryukyu Island pit viper)).